The sequence spans 874 residues: Probable inorganic carbon transporter subunit DabA (874 aa).

Zn(2+)-binding residues include cysteine 398, aspartate 400, histidine 580, and cysteine 595.

Belongs to the inorganic carbon transporter (TC 9.A.2) DabA family. Forms a complex with DabB. Requires Zn(2+) as cofactor.

It localises to the cell membrane. Its function is as follows. Part of an energy-coupled inorganic carbon pump. This chain is Probable inorganic carbon transporter subunit DabA, found in Bacillus thuringiensis subsp. konkukian (strain 97-27).